The primary structure comprises 204 residues: dITP/XTP pyrophosphatase (204 aa).

Position 8-13 (8-13 (SRNRKK)) interacts with substrate. Asp73 (proton acceptor) is an active-site residue. Asp73 provides a ligand contact to Mg(2+). Residues Ser74, 155 to 158 (FGYD), Lys179, and 184 to 185 (HR) each bind substrate.

This sequence belongs to the HAM1 NTPase family. In terms of assembly, homodimer. Requires Mg(2+) as cofactor.

The enzyme catalyses XTP + H2O = XMP + diphosphate + H(+). It catalyses the reaction dITP + H2O = dIMP + diphosphate + H(+). It carries out the reaction ITP + H2O = IMP + diphosphate + H(+). In terms of biological role, pyrophosphatase that catalyzes the hydrolysis of nucleoside triphosphates to their monophosphate derivatives, with a high preference for the non-canonical purine nucleotides XTP (xanthosine triphosphate), dITP (deoxyinosine triphosphate) and ITP. Seems to function as a house-cleaning enzyme that removes non-canonical purine nucleotides from the nucleotide pool, thus preventing their incorporation into DNA/RNA and avoiding chromosomal lesions. The sequence is that of dITP/XTP pyrophosphatase from Mycolicibacterium paratuberculosis (strain ATCC BAA-968 / K-10) (Mycobacterium paratuberculosis).